A 310-amino-acid chain; its full sequence is UDP-N-acetylenolpyruvoylglucosamine reductase (310 aa).

The region spanning 34-213 (RAGGNAEVLF…LRRMNEITSS (180 aa)) is the FAD-binding PCMH-type domain. The active site involves Arg-178. The Proton donor role is filled by Ser-227. The active site involves Glu-297.

Belongs to the MurB family. FAD serves as cofactor.

Its subcellular location is the cytoplasm. It carries out the reaction UDP-N-acetyl-alpha-D-muramate + NADP(+) = UDP-N-acetyl-3-O-(1-carboxyvinyl)-alpha-D-glucosamine + NADPH + H(+). Its pathway is cell wall biogenesis; peptidoglycan biosynthesis. Cell wall formation. The protein is UDP-N-acetylenolpyruvoylglucosamine reductase of Parvibaculum lavamentivorans (strain DS-1 / DSM 13023 / NCIMB 13966).